We begin with the raw amino-acid sequence, 337 residues long: Glyceraldehyde-3-phosphate dehydrogenase (337 aa).

NAD(+) contacts are provided by residues Arg-12–Ile-13, Asp-34, and Lys-79. D-glyceraldehyde 3-phosphate is bound by residues Ser-150–Thr-152, Thr-181, Thr-210–Gly-211, and Arg-233. The active-site Nucleophile is the Cys-151. Asn-315 is a binding site for NAD(+).

It belongs to the glyceraldehyde-3-phosphate dehydrogenase family. Homotetramer.

Its subcellular location is the cytoplasm. It catalyses the reaction D-glyceraldehyde 3-phosphate + phosphate + NAD(+) = (2R)-3-phospho-glyceroyl phosphate + NADH + H(+). It participates in carbohydrate degradation; glycolysis; pyruvate from D-glyceraldehyde 3-phosphate: step 1/5. The protein is Glyceraldehyde-3-phosphate dehydrogenase (GPD) of Schizophyllum commune (Split gill fungus).